The chain runs to 224 residues: Phosphoribosyltransferase domain-containing protein 1 (224 aa).

Residues E140 and D141 each contribute to the Mg(2+) site. GMP contacts are provided by residues 140–148 (EDIINTGRT), K172, 193–194 (FV), and D200. A Mg(2+)-binding site is contributed by D200.

This sequence belongs to the purine/pyrimidine phosphoribosyltransferase family.

The protein is Phosphoribosyltransferase domain-containing protein 1 (prtfdc1) of Xenopus tropicalis (Western clawed frog).